A 201-amino-acid chain; its full sequence is Large ribosomal subunit protein uL4 (201 aa).

The disordered stretch occupies residues 45–71; that stretch reads AQKTRAEVTGSGKKPWRQKGTGRARAG.

This sequence belongs to the universal ribosomal protein uL4 family. Part of the 50S ribosomal subunit.

One of the primary rRNA binding proteins, this protein initially binds near the 5'-end of the 23S rRNA. It is important during the early stages of 50S assembly. It makes multiple contacts with different domains of the 23S rRNA in the assembled 50S subunit and ribosome. Functionally, forms part of the polypeptide exit tunnel. This Shewanella pealeana (strain ATCC 700345 / ANG-SQ1) protein is Large ribosomal subunit protein uL4.